The primary structure comprises 293 residues: Elongation factor Ts (293 aa).

Residues 80–83 are involved in Mg(2+) ion dislocation from EF-Tu; that stretch reads TDFV.

It belongs to the EF-Ts family.

The protein localises to the cytoplasm. In terms of biological role, associates with the EF-Tu.GDP complex and induces the exchange of GDP to GTP. It remains bound to the aminoacyl-tRNA.EF-Tu.GTP complex up to the GTP hydrolysis stage on the ribosome. This chain is Elongation factor Ts, found in Staphylococcus aureus (strain Mu3 / ATCC 700698).